The following is a 1070-amino-acid chain: DNA-directed RNA polymerase subunit beta (1070 aa).

Belongs to the RNA polymerase beta chain family. In plastids the minimal PEP RNA polymerase catalytic core is composed of four subunits: alpha, beta, beta', and beta''. When a (nuclear-encoded) sigma factor is associated with the core the holoenzyme is formed, which can initiate transcription.

It localises to the plastid. The protein resides in the chloroplast. It catalyses the reaction RNA(n) + a ribonucleoside 5'-triphosphate = RNA(n+1) + diphosphate. DNA-dependent RNA polymerase catalyzes the transcription of DNA into RNA using the four ribonucleoside triphosphates as substrates. The protein is DNA-directed RNA polymerase subunit beta of Gossypium hirsutum (Upland cotton).